The chain runs to 706 residues: Glycogen [starch] synthase (706 aa).

R26 is a UDP binding site. Positions 191 and 197 each coordinate UDP-alpha-D-glucose. Residues H277, E278, Q280, H283, and K287 each contribute to the alpha-D-glucose 6-phosphate site. Residue R317 coordinates UDP. R317 contributes to the UDP-alpha-D-glucose binding site. H491 lines the alpha-D-glucose 6-phosphate pocket. The UDP-alpha-D-glucose site is built by E500, W502, and G503. A UDP-binding site is contributed by T505. 2 residues coordinate alpha-D-glucose 6-phosphate: R572 and R576. Residues 670 to 706 form a disordered region; the sequence is PEEEDPEEYPFPLTLKQRTGPGSPLDSIQGLQLNGTR.

This sequence belongs to the glycosyltransferase 3 family. In terms of assembly, interacts with glucogenin gnn; the interaction is direct.

It catalyses the reaction [(1-&gt;4)-alpha-D-glucosyl](n) + UDP-alpha-D-glucose = [(1-&gt;4)-alpha-D-glucosyl](n+1) + UDP + H(+). The protein operates within glycan biosynthesis; glycogen biosynthesis. Its activity is regulated as follows. Allosteric activation by glucose-6-phosphate, and phosphorylation by a cAMP-dependent kinase. Its function is as follows. Glycogen synthase participates in the glycogen biosynthetic process along with glycogenin and glycogen branching enzyme. Extends the primer composed of a few glucose units formed by glycogenin by adding new glucose units to it. In this context, glycogen synthase transfers the glycosyl residue from UDP-Glc to the non-reducing end of alpha-1,4-glucan. This chain is Glycogen [starch] synthase (gsy-1), found in Neurospora crassa (strain ATCC 24698 / 74-OR23-1A / CBS 708.71 / DSM 1257 / FGSC 987).